A 307-amino-acid chain; its full sequence is MIEVIFLGTGGIKPTPERNVPSIAIRIGSEIVLFDVGEGTLRQMEIAGLNPMRIKRIFITHFHGDHYLGLAAIIQTMNLWDRRETLHIYGPENSGEFISNFLKSGYFAPGFDVVVHEITGKARLQFENYEIWTFEVSHGIPALGYVFKEKDRRGNFDLEKIKSLGLTPGPWMKELEKRKIIKIGERVIRLSEVTGPKKRGAKVVYTGDTEPIDDIVEFSKRADLLIHEATYISSEHRKDSYHTTIEEAYEMFKSSKARHLALFHRAPRYSYQEYAVAAKELCPEAYVPRDFDRVFVGGMGNVIFKVR.

Residues His61, His63, Asp65, His66, His138, Asp208, and His264 each contribute to the Zn(2+) site. Asp65 functions as the Proton acceptor in the catalytic mechanism.

Belongs to the RNase Z family. Homodimer. It depends on Zn(2+) as a cofactor.

The catalysed reaction is Endonucleolytic cleavage of RNA, removing extra 3' nucleotides from tRNA precursor, generating 3' termini of tRNAs. A 3'-hydroxy group is left at the tRNA terminus and a 5'-phosphoryl group is left at the trailer molecule.. Its function is as follows. Zinc phosphodiesterase, which displays some tRNA 3'-processing endonuclease activity. Probably involved in tRNA maturation, by removing a 3'-trailer from precursor tRNA. Also shows activity toward a broad range of substrates, such as intron containing pre-tRNAs, 5' extended precursors and non-RNA substrates. This Pyrococcus furiosus (strain ATCC 43587 / DSM 3638 / JCM 8422 / Vc1) protein is Ribonuclease Z.